The primary structure comprises 222 residues: Hexitol phosphatase B (222 aa).

The Nucleophile role is filled by aspartate 13. Aspartate 13 and aspartate 15 together coordinate a divalent metal cation. Substrate is bound by residues 13–15 (DMD), 115–116 (SA), and lysine 148. Aspartate 15 (proton donor) is an active-site residue. Aspartate 173 serves as a coordination point for a divalent metal cation.

The protein belongs to the HAD-like hydrolase superfamily. CbbY/CbbZ/Gph/YieH family. The cofactor is Mg(2+). Requires Mn(2+) as cofactor. Co(2+) serves as cofactor. It depends on Zn(2+) as a cofactor.

The catalysed reaction is sugar phosphate + H2O = sugar + phosphate.. It carries out the reaction 2-deoxy-D-glucose 6-phosphate + H2O = 2-deoxy-D-glucose + phosphate. It catalyses the reaction D-mannitol 1-phosphate + H2O = D-mannitol + phosphate. The enzyme catalyses D-sorbitol 6-phosphate + H2O = D-sorbitol + phosphate. Sugar-phosphate phosphohydrolase that catalyzes the dephosphorylation of D-mannitol 1-phosphate and D-sorbitol 6-phosphate. Also catalyzes the dephosphorylation of 2-deoxyglucose 6-phosphate (2dGlu6P); this is a biologically important activity in vivo since it contributes to the elimination of this toxic compound and plays an important role in the resistance of E.coli to 2-deoxyglucose. To a lesser extent, is also able to dephosphorylate mannose 6-phosphate (Man6P), erythrose-4-phosphate, 2-deoxyribose-5-phosphate (2dRib5P), ribose-5-phosphate (Rib5P) and glucose-6-phosphate (Glu6P) in vitro. The polypeptide is Hexitol phosphatase B (Escherichia coli (strain K12)).